Reading from the N-terminus, the 278-residue chain is Splicing factor YJU2 (278 aa).

Residues C51, C54, C88, and C91 each coordinate Zn(2+). Residues H228 to K278 are disordered. 2 short sequence motifs (nuclear localization signal) span residues K242–K258 and S260–K278.

It belongs to the CWC16 family. YJU2 subfamily. In terms of assembly, component of the spliceosome. Present in the activated B complex, the catalytically activated B* complex which catalyzes the branching, the catalytic step 1 C complex catalyzing the exon ligation, and the postcatalytic P complex containing the ligated exons (mRNA) and the excised lariat intron. Interacts (via C-terminus) with CLF1. Interacts (via N-terminus) with SYF1. Interacts with U2 snRNA; this interaction is direct. Identified in the CWC complex (or CEF1-associated complex), a spliceosome sub-complex reminiscent of a late-stage spliceosome composed of the U2, U5 and U6 snRNAs and at least BUD13, BUD31, BRR2, CDC40, CEF1, CLF1, CUS1, CWC2, CWC15, CWC21, CWC22, CWC23, CWC24, CWC25, CWC27, ECM2, HSH155, IST3, ISY1, LEA1, MSL1, NTC20, PRP8, PRP9, PRP11, PRP19, PRP21, PRP22, PRP45, PRP46, SLU7, SMB1, SMD1, SMD2, SMD3, SMX2, SMX3, SNT309, SNU114, SPP2, SYF1, SYF2, RSE1 and YJU2.

Its subcellular location is the nucleus. In terms of biological role, part of the spliceosome which catalyzes two sequential transesterification reactions, first the excision of the non-coding intron from pre-mRNA and then the ligation of the coding exons to form the mature mRNA. Plays a role (via N-terminus) in stabilizing the structure of the spliceosome catalytic core and docking of the branch helix into the active site, producing 5'-exon and lariat intron-3'-intermediates. Further stabilizes spliceosome conformation for 3'-splice site docking (via C-terminus) promoting exon ligation. The polypeptide is Splicing factor YJU2 (Saccharomyces cerevisiae (strain ATCC 204508 / S288c) (Baker's yeast)).